The chain runs to 244 residues: uncharacterized protein (244 aa).

6 helical membrane-spanning segments follow: residues 5–27 (KFAL…LLAV), 37–59 (IVMV…SRFL), 87–106 (LVFI…FYYG), 116–138 (LSLF…FFVA), 159–181 (FWIW…VQPS), and 196–218 (GVFN…RMVA).

It is found in the cell membrane. This is an uncharacterized protein from Archaeoglobus fulgidus (strain ATCC 49558 / DSM 4304 / JCM 9628 / NBRC 100126 / VC-16).